Consider the following 163-residue polypeptide: Small heat shock protein C1 (163 aa).

Residues 55–163 form the sHSP domain; that stretch reads MFYESSSIKS…EQDAKEITIN (109 aa).

The protein belongs to the small heat shock protein (HSP20) family.

The polypeptide is Small heat shock protein C1 (hspC1) (Rickettsia typhi (strain ATCC VR-144 / Wilmington)).